The following is a 303-amino-acid chain: Cobalamin biosynthesis protein CobD (303 aa).

4 consecutive transmembrane segments (helical) span residues 65–85, 147–167, 235–255, and 283–303; these read LLAWLLSLLPGIGWLAEIVLL, DAVFAALFWFIVAGAPGVVLY, AGPVMAAGAGALGVVLGGAAI, and LVWAGVGVWLLVLLFGGWLYA.

Belongs to the CobD/CbiB family.

It localises to the cell membrane. It participates in cofactor biosynthesis; adenosylcobalamin biosynthesis. In terms of biological role, converts cobyric acid to cobinamide by the addition of aminopropanol on the F carboxylic group. This chain is Cobalamin biosynthesis protein CobD, found in Stutzerimonas stutzeri (strain A1501) (Pseudomonas stutzeri).